Here is a 929-residue protein sequence, read N- to C-terminus: Isoleucine--tRNA ligase (929 aa).

The 'HIGH' region signature appears at 58–68 (PYANGDIHIGH). Glu-563 is a binding site for L-isoleucyl-5'-AMP. Positions 605 to 609 (KMSKS) match the 'KMSKS' region motif. Residue Lys-608 coordinates ATP. Zn(2+) is bound by residues Cys-892, Cys-895, Cys-912, and Cys-915.

It belongs to the class-I aminoacyl-tRNA synthetase family. IleS type 1 subfamily. As to quaternary structure, monomer. It depends on Zn(2+) as a cofactor.

It localises to the cytoplasm. It catalyses the reaction tRNA(Ile) + L-isoleucine + ATP = L-isoleucyl-tRNA(Ile) + AMP + diphosphate. Its function is as follows. Catalyzes the attachment of isoleucine to tRNA(Ile). As IleRS can inadvertently accommodate and process structurally similar amino acids such as valine, to avoid such errors it has two additional distinct tRNA(Ile)-dependent editing activities. One activity is designated as 'pretransfer' editing and involves the hydrolysis of activated Val-AMP. The other activity is designated 'posttransfer' editing and involves deacylation of mischarged Val-tRNA(Ile). This Neisseria meningitidis serogroup B (strain ATCC BAA-335 / MC58) protein is Isoleucine--tRNA ligase.